A 323-amino-acid chain; its full sequence is DNA-directed RNA polymerase subunit alpha 1 (323 aa).

Residues 1–228 form an alpha N-terminal domain (alpha-NTD) region; that stretch reads MSNNNSKQEF…EQISVFVSLR (228 aa). An alpha C-terminal domain (alpha-CTD) region spans residues 244 to 323; it reads IDPILLKPID…DNFRELVEGK (80 aa).

It belongs to the RNA polymerase alpha chain family. As to quaternary structure, homodimer. The RNAP catalytic core consists of 2 alpha, 1 beta, 1 beta' and 1 omega subunit. When a sigma factor is associated with the core the holoenzyme is formed, which can initiate transcription.

It catalyses the reaction RNA(n) + a ribonucleoside 5'-triphosphate = RNA(n+1) + diphosphate. Functionally, DNA-dependent RNA polymerase catalyzes the transcription of DNA into RNA using the four ribonucleoside triphosphates as substrates. The chain is DNA-directed RNA polymerase subunit alpha 1 from Francisella tularensis subsp. novicida (strain U112).